Reading from the N-terminus, the 163-residue chain is C-type lectin lectoxin-Lio2 (163 aa).

Positions 1–21 (MERFIFAALLVVALSLSGTGA) are cleaved as a signal peptide. 3 disulfide bridges follow: Cys25-Cys36, Cys53-Cys152, and Cys127-Cys144. In terms of domain architecture, C-type lectin spans 32–153 (SDGYCYKVFK…CRSKRYFICK (122 aa)). The short motif at 117–119 (EPN) is the Mannose-binding element. The Ca(2+) site is built by Glu125 and Asp141.

The protein belongs to the true venom lectin family. Expressed by the venom gland.

It localises to the secreted. Mannose-binding lectin which recognizes specific carbohydrate structures and agglutinates a variety of animal cells by binding to cell-surface glycoproteins and glycolipids. May be a calcium-dependent lectin. The chain is C-type lectin lectoxin-Lio2 from Erythrolamprus poecilogyrus (Water snake).